Here is a 242-residue protein sequence, read N- to C-terminus: ATP-dependent dethiobiotin synthetase BioD (242 aa).

12–17 lines the ATP pocket; it reads EVGKTV. A Mg(2+)-binding site is contributed by threonine 16. The active site involves lysine 37. Serine 41 lines the substrate pocket. ATP-binding positions include aspartate 51 and 112–115; that span reads EGAG. Mg(2+) is bound by residues aspartate 51 and glutamate 112.

This sequence belongs to the dethiobiotin synthetase family. Homodimer. The cofactor is Mg(2+).

Its subcellular location is the cytoplasm. The catalysed reaction is (7R,8S)-7,8-diammoniononanoate + CO2 + ATP = (4R,5S)-dethiobiotin + ADP + phosphate + 3 H(+). It functions in the pathway cofactor biosynthesis; biotin biosynthesis; biotin from 7,8-diaminononanoate: step 1/2. Functionally, catalyzes a mechanistically unusual reaction, the ATP-dependent insertion of CO2 between the N7 and N8 nitrogen atoms of 7,8-diaminopelargonic acid (DAPA, also called 7,8-diammoniononanoate) to form a ureido ring. This Bacillus thuringiensis subsp. konkukian (strain 97-27) protein is ATP-dependent dethiobiotin synthetase BioD.